Reading from the N-terminus, the 1183-residue chain is Chromosome partition protein Smc (1183 aa).

P32 to N39 is a binding site for ATP. 2 coiled-coil regions span residues I167–N322 and A358–N497. The tract at residues K409–E442 is disordered. A compositionally biased stretch (basic and acidic residues) spans L419–E442. In terms of domain architecture, SMC hinge spans L523–L632. 2 coiled-coil regions span residues G669–R941 and N980–K1025.

Belongs to the SMC family. Homodimer.

It localises to the cytoplasm. In terms of biological role, required for chromosome condensation and partitioning. The protein is Chromosome partition protein Smc of Chlorobaculum tepidum (strain ATCC 49652 / DSM 12025 / NBRC 103806 / TLS) (Chlorobium tepidum).